A 351-amino-acid chain; its full sequence is Putative ABC transporter permease protein MJ0876 (351 aa).

The next 9 helical transmembrane spans lie at 4–24, 59–79, 99–119, 124–144, 152–172, 196–216, 249–269, 284–304, and 322–342; these read VGILLILFILSLILPFTALYL, LPPIIGAVLIGLTISVAGLML, VLMVVALVIFIDSLSHLFEIF, ILVAGWCGGIFSMILLIIIAL, VIIVALLLSYFFMGLRAYLIA, GDVIPMTICSIIFIIGVMFLI, FITGAIIPYVGLIAFIGIIAP, LVPATMFLGVILMVSCHILSL, and PLPIGAVLDILGGMLVVYLVY.

It belongs to the binding-protein-dependent transport system permease family. FecCD subfamily.

It is found in the cell membrane. Its function is as follows. Probably part of a binding-protein-dependent transport system. Probably responsible for the translocation of the substrate across the membrane. The sequence is that of Putative ABC transporter permease protein MJ0876 from Methanocaldococcus jannaschii (strain ATCC 43067 / DSM 2661 / JAL-1 / JCM 10045 / NBRC 100440) (Methanococcus jannaschii).